The primary structure comprises 347 residues: Beta-hexosaminidase (347 aa).

Residues Asp64, Arg72, Arg138, and 168 to 169 contribute to the substrate site; that span reads KH. His181 acts as the Proton donor/acceptor in catalysis. Residue Asp251 is the Nucleophile of the active site.

It belongs to the glycosyl hydrolase 3 family. NagZ subfamily.

Its subcellular location is the cytoplasm. It carries out the reaction Hydrolysis of terminal non-reducing N-acetyl-D-hexosamine residues in N-acetyl-beta-D-hexosaminides.. It participates in cell wall biogenesis; peptidoglycan recycling. Its function is as follows. Plays a role in peptidoglycan recycling by cleaving the terminal beta-1,4-linked N-acetylglucosamine (GlcNAc) from peptide-linked peptidoglycan fragments, giving rise to free GlcNAc, anhydro-N-acetylmuramic acid and anhydro-N-acetylmuramic acid-linked peptides. The polypeptide is Beta-hexosaminidase (Thioalkalivibrio sulfidiphilus (strain HL-EbGR7)).